The chain runs to 92 residues: Small ribosomal subunit protein uS19 (92 aa).

The protein belongs to the universal ribosomal protein uS19 family.

Protein S19 forms a complex with S13 that binds strongly to the 16S ribosomal RNA. This chain is Small ribosomal subunit protein uS19, found in Cyanothece sp. (strain PCC 7425 / ATCC 29141).